Reading from the N-terminus, the 46-residue chain is DNA-directed RNA polymerase subunit Rpo12 (46 aa).

Positions 8, 23, and 26 each coordinate Zn(2+).

The protein belongs to the archaeal Rpo12/eukaryotic RPC10 RNA polymerase subunit family. In terms of assembly, part of the RNA polymerase complex. Zn(2+) is required as a cofactor.

The protein localises to the cytoplasm. The catalysed reaction is RNA(n) + a ribonucleoside 5'-triphosphate = RNA(n+1) + diphosphate. Its function is as follows. DNA-dependent RNA polymerase (RNAP) catalyzes the transcription of DNA into RNA using the four ribonucleoside triphosphates as substrates. The chain is DNA-directed RNA polymerase subunit Rpo12 from Archaeoglobus fulgidus (strain ATCC 49558 / DSM 4304 / JCM 9628 / NBRC 100126 / VC-16).